Consider the following 252-residue polypeptide: Phosphonates import ATP-binding protein PhnC 1 (252 aa).

The ABC transporter domain occupies 2–244 (ISLNKLGVTY…QLEEIYQTLS (243 aa)). Residue 35 to 42 (GSSGAGKS) coordinates ATP.

Belongs to the ABC transporter superfamily. Phosphonates importer (TC 3.A.1.9.1) family. In terms of assembly, the complex is composed of two ATP-binding proteins (PhnC), two transmembrane proteins (PhnE) and a solute-binding protein (PhnD).

The protein resides in the cell inner membrane. It carries out the reaction phosphonate(out) + ATP + H2O = phosphonate(in) + ADP + phosphate + H(+). Its function is as follows. Part of the ABC transporter complex PhnCDE involved in phosphonates import. Responsible for energy coupling to the transport system. The chain is Phosphonates import ATP-binding protein PhnC 1 from Trichodesmium erythraeum (strain IMS101).